We begin with the raw amino-acid sequence, 325 residues long: GMP reductase (325 aa).

The Thioimidate intermediate role is filled by C174. An NADP(+)-binding site is contributed by 203–226 (IVADGGIRNNGDIAKSIRFGASMC).

It belongs to the IMPDH/GMPR family. GuaC type 2 subfamily.

It carries out the reaction IMP + NH4(+) + NADP(+) = GMP + NADPH + 2 H(+). In terms of biological role, catalyzes the irreversible NADPH-dependent deamination of GMP to IMP. It functions in the conversion of nucleobase, nucleoside and nucleotide derivatives of G to A nucleotides, and in maintaining the intracellular balance of A and G nucleotides. The chain is GMP reductase from Ligilactobacillus salivarius (strain UCC118) (Lactobacillus salivarius).